A 168-amino-acid polypeptide reads, in one-letter code: Cyanate hydratase (168 aa).

Catalysis depends on residues R94, E97, and S120.

This sequence belongs to the cyanase family.

The catalysed reaction is cyanate + hydrogencarbonate + 3 H(+) = NH4(+) + 2 CO2. Catalyzes the reaction of cyanate with bicarbonate to produce ammonia and carbon dioxide. The chain is Cyanate hydratase from Oryza sativa subsp. indica (Rice).